Consider the following 162-residue polypeptide: Regulator of sigma D (162 aa).

Belongs to the Rsd/AlgQ family. Interacts with RpoD.

The protein resides in the cytoplasm. In terms of biological role, binds RpoD and negatively regulates RpoD-mediated transcription activation by preventing the interaction between the primary sigma factor RpoD with the catalytic core of the RNA polymerase and with promoter DNA. May be involved in replacement of the RNA polymerase sigma subunit from RpoD to RpoS during the transition from exponential growth to the stationary phase. The chain is Regulator of sigma D from Salmonella agona (strain SL483).